We begin with the raw amino-acid sequence, 278 residues long: Msm operon regulatory protein (278 aa).

Positions 176–274 (NQVKKIIHSQ…GKSPSKFRKE (99 aa)) constitute an HTH araC/xylS-type domain. DNA-binding regions (H-T-H motif) lie at residues 193–214 (NDIA…RKST) and 241–264 (IAEI…KNYF).

Functionally, regulatory protein for the msm operon for multiple sugar metabolism. Activates the transcription of the msmEFGK, aga, dexB and gftA genes. The chain is Msm operon regulatory protein (msmR) from Streptococcus mutans serotype c (strain ATCC 700610 / UA159).